The following is a 988-amino-acid chain: Voltage-gated delayed rectifier potassium channel KCNH5 (988 aa).

The Cytoplasmic segment spans residues 1 to 217; sequence MPGGKRGLVA…LHYCAFKTTW (217 aa). The PAS domain maps to 12–90; sequence QNTFLENIVR…VRQTFDNYES (79 aa). In terms of domain architecture, PAC spans 91–143; it reads NCFEVLLYKKNRTPVWFYMQIAPIRNEHEKVVLFLCTFKDITLFKQPIEDDST. The chain crosses the membrane as a helical span at residues 218-238; it reads DWVILILTFYTAIMVPYNVSF. The Extracellular portion of the chain corresponds to 239 to 243; it reads KTKQN. The helical transmembrane segment at 244 to 264 threads the bilayer; that stretch reads NIAWLVLDSVVDVIFLVDIVL. Residues 265–291 are Cytoplasmic-facing; the sequence is NFHTTFVGPGGEVISDPKLIRMNYLKT. A helical transmembrane segment spans residues 292 to 312; it reads WFVIDLLSCLPYDIINAFENV. Topologically, residues 313–319 are extracellular; the sequence is DEGISSL. A helical; Voltage-sensor membrane pass occupies residues 320-340; it reads FSSLKVVRLLRLGRVARKLDH. Topologically, residues 341 to 346 are cytoplasmic; it reads YLEYGA. The chain crosses the membrane as a helical span at residues 347–367; sequence AVLVLLVCVFGLVAHWLACIW. At 368–419 the chain is on the extracellular side; it reads YSIGDYEVIDEVTNTIQIDSWLYQLALSIGTPYRYNTSAGIWEGGPSKDSLY. Residue Asn403 is glycosylated (N-linked (GlcNAc...) asparagine). An intramembrane region (pore-forming) is located at residues 420 to 440; it reads VSSLYFTMTSLTTIGFGNIAP. The short motif at 432 to 437 is the Selectivity filter element; the sequence is TIGFGN. At 441 to 446 the chain is on the extracellular side; that stretch reads TTDVEK. A helical membrane pass occupies residues 447–467; sequence MFSVAMMMVGSLLYATIFGNV. The Cytoplasmic segment spans residues 468 to 988; it reads TTIFQQMYAN…PESDKDEIHF (521 aa). Residue 550–667 coordinates a nucleoside 3',5'-cyclic phosphate; it reads AFRLASDGCL…NSFSRNLTLT (118 aa). Residues 704 to 715 are calmodulin-binding; the sequence is HPVRKLFQKFKQ. Residues 717–742 are disordered; that stretch reads KELRNQGSTQGDPERNQLQVESRSLQ. Polar residues predominate over residues 721-742; that stretch reads NQGSTQGDPERNQLQVESRSLQ. Lys785 is covalently cross-linked (Glycyl lysine isopeptide (Lys-Gly) (interchain with G-Cter in ubiquitin)). Positions 838-890 are disordered; the sequence is GLLSEDPKSSDSENSVTKNPLRKTDSCDSGITKSDLRLDKAGEARSPLEHSPI. The segment covering 871–885 has biased composition (basic and acidic residues); sequence SDLRLDKAGEARSPL. Ser883 is modified (phosphoserine). The tract at residues 909 to 948 is CAD (involved in subunit assembly); it reads TLQEVKHELKEDIQLLSCRMTALEKQVAEILKILSEKSVP. Residues 969-988 form a disordered region; it reads DIFSVSRPESPESDKDEIHF. Residues 977–988 are compositionally biased toward basic and acidic residues; the sequence is ESPESDKDEIHF.

The protein belongs to the potassium channel family. H (Eag) (TC 1.A.1.20) subfamily. Kv10.2/KCNH5 sub-subfamily. As to quaternary structure, homotetramer. The potassium channel is probably composed of a homo- or heterotetrameric complex of pore-forming alpha subunits that can associate with modulating beta subunits. Heteromultimer with KCNH1/EAG. In terms of tissue distribution, detected in brain, skeletal muscle, heart, placenta, lung and liver, and at low levels in kidney.

Its subcellular location is the membrane. The enzyme catalyses K(+)(in) = K(+)(out). Its function is as follows. Pore-forming (alpha) subunit of a voltage-gated delayed rectifier potassium channel that mediates outward-rectifying potassium currents which, on depolarization, reaches a steady-state level and do not inactivate. The kinetic is characterized by a slow activation time course and a small voltage dependence of the activation time constants, therefore, starts to open at more negative voltages. The activation kinetics depend on the prepulse potential and external divalent cation concentration. The time course of activation is biphasic with a fast and a slowly activating current component. With negative prepulses, the current activation is delayed and slowed down several fold, whereas more positive prepulses speed up activation, therefore the activation rate depends on holding potential. The sequence is that of Voltage-gated delayed rectifier potassium channel KCNH5 from Homo sapiens (Human).